A 971-amino-acid chain; its full sequence is MTVKNETVDYSKTLYLPQTNFPMRAGLPQKELELMERWEKRGLYAQLRQQAKDRPLYTLHDGPPYANGHIHIGHALNKVLKDVIIRSFQMRGFNANYVPGWDCHGLPIEWKIEEKYRAQGKNKDDVPLNEFRQECRQFAQHWITVQSEEFKRLGVVGDFNRPYTTMAFHAEARIASELMKFALSDQIYRGSKPVMWSVVERTALAEAEIEYHDHESDVIWVKFPVLQADSKDLYDAYVVIWTTTPWTIPANRAVSYSSQISYSIYEVKSAENDFGPQVGEKLLFADALVMSCAEKAKLVLKRLRVISAKEFKTLVLSHPLKGLAGGYNNKIAMLDGSHVTESAGTGFVHTAPSHGREDFEIWNAYKPLLEQSGIDSSIPFPVDDAGFYTKDAPGFGPDRKGGAIRVIDDNGKMGDANKEVINALIKADRLFARGRLKHSYPHSWRSKKPIIFRNTPQWFISMDKDLGDGSTLRSRALKAISMTRFVPSSGQNRLASMIADRPDWVLSRQRAWGVPICIFANEDGVILKDERVNERILRAFEAEGADAWFAEGARERFLGERAHESWIQVVDILDVWFDSGASHSFVLEDRDDLNWPADVYFEGSDQHRGWFQSSLLESCGTRACSPYKAVITHGFTLDENGKKMSKSLGNTVVPQEIIKTFGADIFRLWVMTTDYWEDQRLGKQILQTNVDSYRKLRNAIRWMLGTLAHDEGEEISYCALPDLEKLILHRLSELDQLVNRAYDDFDFKKIMRALLDFSITELSAFYFDIRKDSLYCDPPSSKKRKASLQVVREIFERMVIWLAPMLPFTMEEAWLERYPESTSVHLEQFRPVPMEWQNESLAERWKKIRQVRKVVTGALELERADKRIGSSLEAAPIVFISNPVLREALENLDMAEICITSALTITQGVPPSDAFILSDVEGVGVYPRKALGTKCARSWRYTQDVGSDPTYPDVSARDAAALRELQVLGKI.

A 'HIGH' region motif is present at residues 64-74 (PYANGHIHIGH). Glu602 serves as a coordination point for L-isoleucyl-5'-AMP. The 'KMSKS' region motif lies at 643 to 647 (KMSKS). Lys646 lines the ATP pocket.

It belongs to the class-I aminoacyl-tRNA synthetase family. IleS type 1 subfamily. Monomer.

It is found in the cytoplasm. It catalyses the reaction tRNA(Ile) + L-isoleucine + ATP = L-isoleucyl-tRNA(Ile) + AMP + diphosphate. Catalyzes the attachment of isoleucine to tRNA(Ile). As IleRS can inadvertently accommodate and process structurally similar amino acids such as valine, to avoid such errors it has two additional distinct tRNA(Ile)-dependent editing activities. One activity is designated as 'pretransfer' editing and involves the hydrolysis of activated Val-AMP. The other activity is designated 'posttransfer' editing and involves deacylation of mischarged Val-tRNA(Ile). The chain is Isoleucine--tRNA ligase from Bartonella henselae (strain ATCC 49882 / DSM 28221 / CCUG 30454 / Houston 1) (Rochalimaea henselae).